Here is a 372-residue protein sequence, read N- to C-terminus: Chaperone protein DnaJ (372 aa).

In terms of domain architecture, J spans 5–69 (DYYEVLGVDR…QKKARYDQFG (65 aa)). The segment at 129–211 (GKETEIEIPR…CSGKGKVRKR (83 aa)) adopts a CR-type zinc-finger fold. The Zn(2+) site is built by cysteine 142, cysteine 145, cysteine 159, cysteine 162, cysteine 185, cysteine 188, cysteine 199, and cysteine 202. CXXCXGXG motif repeat units follow at residues 142 to 149 (CGTCHGSG), 159 to 166 (CSHCGGSG), 185 to 192 (CNYCEGTG), and 199 to 206 (CATCSGKG).

This sequence belongs to the DnaJ family. As to quaternary structure, homodimer. Zn(2+) is required as a cofactor.

The protein localises to the cytoplasm. Functionally, participates actively in the response to hyperosmotic and heat shock by preventing the aggregation of stress-denatured proteins and by disaggregating proteins, also in an autonomous, DnaK-independent fashion. Unfolded proteins bind initially to DnaJ; upon interaction with the DnaJ-bound protein, DnaK hydrolyzes its bound ATP, resulting in the formation of a stable complex. GrpE releases ADP from DnaK; ATP binding to DnaK triggers the release of the substrate protein, thus completing the reaction cycle. Several rounds of ATP-dependent interactions between DnaJ, DnaK and GrpE are required for fully efficient folding. Also involved, together with DnaK and GrpE, in the DNA replication of plasmids through activation of initiation proteins. This is Chaperone protein DnaJ from Shouchella clausii (strain KSM-K16) (Alkalihalobacillus clausii).